We begin with the raw amino-acid sequence, 259 residues long: Diaminopimelate epimerase (259 aa).

Substrate is bound by residues Asn14, Gln42, and Asn60. Cys69 (proton donor) is an active-site residue. Substrate contacts are provided by residues Gly70 to Asn71, Asn151, Asn184, and Glu202 to Arg203. Cys211 (proton acceptor) is an active-site residue. A substrate-binding site is contributed by Gly212 to Ser213.

Belongs to the diaminopimelate epimerase family. As to quaternary structure, homodimer.

It localises to the cytoplasm. The enzyme catalyses (2S,6S)-2,6-diaminopimelate = meso-2,6-diaminopimelate. Its pathway is amino-acid biosynthesis; L-lysine biosynthesis via DAP pathway; DL-2,6-diaminopimelate from LL-2,6-diaminopimelate: step 1/1. In terms of biological role, catalyzes the stereoinversion of LL-2,6-diaminopimelate (L,L-DAP) to meso-diaminopimelate (meso-DAP), a precursor of L-lysine and an essential component of the bacterial peptidoglycan. This chain is Diaminopimelate epimerase, found in Wolbachia sp. subsp. Brugia malayi (strain TRS).